A 361-amino-acid polypeptide reads, in one-letter code: Histidinol-phosphate aminotransferase (361 aa).

An N6-(pyridoxal phosphate)lysine modification is found at Lys221.

It belongs to the class-II pyridoxal-phosphate-dependent aminotransferase family. Histidinol-phosphate aminotransferase subfamily. As to quaternary structure, homodimer. The cofactor is pyridoxal 5'-phosphate.

It catalyses the reaction L-histidinol phosphate + 2-oxoglutarate = 3-(imidazol-4-yl)-2-oxopropyl phosphate + L-glutamate. Its pathway is amino-acid biosynthesis; L-histidine biosynthesis; L-histidine from 5-phospho-alpha-D-ribose 1-diphosphate: step 7/9. This chain is Histidinol-phosphate aminotransferase, found in Symbiobacterium thermophilum (strain DSM 24528 / JCM 14929 / IAM 14863 / T).